Consider the following 158-residue polypeptide: Transcription elongation factor GreA (158 aa).

Residues 47–68 are a coiled coil; it reads AEYDAAKEAQGLLEMRIAKLEE.

The protein belongs to the GreA/GreB family.

Functionally, necessary for efficient RNA polymerase transcription elongation past template-encoded arresting sites. The arresting sites in DNA have the property of trapping a certain fraction of elongating RNA polymerases that pass through, resulting in locked ternary complexes. Cleavage of the nascent transcript by cleavage factors such as GreA or GreB allows the resumption of elongation from the new 3'terminus. GreA releases sequences of 2 to 3 nucleotides. This chain is Transcription elongation factor GreA, found in Flavobacterium johnsoniae (strain ATCC 17061 / DSM 2064 / JCM 8514 / BCRC 14874 / CCUG 350202 / NBRC 14942 / NCIMB 11054 / UW101) (Cytophaga johnsonae).